We begin with the raw amino-acid sequence, 850 residues long: Mitogen-activated protein kinase kinase kinase 11 (850 aa).

Ser11 bears the Phosphoserine mark. Residues Gly18–Arg31 show a composition bias toward gly residues. Residues Gly18 to Lys37 form a disordered region. Residue Ser35 is modified to Phosphoserine. An SH3 domain is found at Tyr42–Gly106. The Protein kinase domain maps to Leu118–Leu380. ATP-binding positions include Ile124–Val132 and Lys145. Asp242 serves as the catalytic Proton acceptor. Thr278 carries the post-translational modification Phosphothreonine; by autocatalysis. Ser282 carries the post-translational modification Phosphoserine; by autocatalysis and MAP4K1. The residue at position 395 (Ser395) is a Phosphoserine. 2 leucine-zipper regions span residues Ile404 to Leu425 and Leu439 to Leu460. Residues Ser508, Ser525, Ser549, Ser556, and Ser557 each carry the phosphoserine modification. Residues Leu536 to Pro850 form a disordered region. A compositionally biased stretch (basic and acidic residues) spans Arg551–Ala563. Over residues Ser598 to Leu610 the composition is skewed to low complexity. A Phosphoserine modification is found at Ser655. Pro residues predominate over residues Thr677–Pro693. At Thr712 the chain carries Phosphothreonine. Phosphoserine is present on residues Ser728, Ser731, Ser743, Ser751, Ser761, Ser773, Ser792, Ser796, and Ser818. Over residues Arg790–Arg802 the composition is skewed to pro residues. Over residues Arg803–Pro819 the composition is skewed to low complexity.

Belongs to the protein kinase superfamily. STE Ser/Thr protein kinase family. MAP kinase kinase kinase subfamily. In terms of assembly, homodimer; undergoes dimerization during activation. Interacts with MAP2K4/MKK4. Interacts with MAP2K7/MKK7. Found in a complex with SH3RF1, RAC1, MAP2K7/MKK7, MAPK8IP1/JIP1 and MAPK8/JNK1. Mg(2+) serves as cofactor. Post-translationally, autophosphorylation on serine and threonine residues within the activation loop plays a role in enzyme activation. Thr-278 is likely to be the main autophosphorylation site. Phosphorylation of Ser-556 and Ser-557 is induced by CDC42.

It localises to the cytoplasm. The protein resides in the cytoskeleton. It is found in the microtubule organizing center. The protein localises to the centrosome. It carries out the reaction L-seryl-[protein] + ATP = O-phospho-L-seryl-[protein] + ADP + H(+). It catalyses the reaction L-threonyl-[protein] + ATP = O-phospho-L-threonyl-[protein] + ADP + H(+). Homodimerization via the leucine zipper domains is required for autophosphorylation and subsequent activation. Activates the JUN N-terminal pathway. Required for serum-stimulated cell proliferation and for mitogen and cytokine activation of MAPK14 (p38), MAPK3 (ERK) and MAPK8 (JNK1) through phosphorylation and activation of MAP2K4/MKK4 and MAP2K7/MKK7. Plays a role in mitogen-stimulated phosphorylation and activation of BRAF, but does not phosphorylate BRAF directly. Influences microtubule organization during the cell cycle. This chain is Mitogen-activated protein kinase kinase kinase 11 (Map3k11), found in Rattus norvegicus (Rat).